The following is a 103-amino-acid chain: Large ribosomal subunit protein bL21 (103 aa).

This sequence belongs to the bacterial ribosomal protein bL21 family. Part of the 50S ribosomal subunit. Contacts protein L20.

Its function is as follows. This protein binds to 23S rRNA in the presence of protein L20. This chain is Large ribosomal subunit protein bL21, found in Chloroflexus aggregans (strain MD-66 / DSM 9485).